The primary structure comprises 706 residues: Complement C1r-B subcomponent (706 aa).

Residues 1–16 (MWLFALLVTLFYGVEG) form the signal peptide. One can recognise a CUB 1 domain in the interval 17–140 (SIYLPQKLYG…KGFLAYYQAV (124 aa)). Residues glutamate 65, aspartate 73, and aspartate 118 each coordinate Ca(2+). Residues cysteine 70 and cysteine 88 are joined by a disulfide bond. An N-linked (GlcNAc...) asparagine glycan is attached at asparagine 124. Residues aspartate 141, leucine 142, and glutamate 144 each coordinate Ca(2+). The region spanning 141 to 189 (DLDECASQPNSVEEGLQPRCQHLCHNYVGGYFCSCHPGYELQKDGQSCQ) is the EGF-like; calcium-binding domain. 4 disulfides stabilise this stretch: cysteine 145/cysteine 164, cysteine 160/cysteine 173, cysteine 175/cysteine 188, and cysteine 192/cysteine 219. Ca(2+) contacts are provided by asparagine 166, tyrosine 167, and glycine 170. Residue asparagine 166 is modified to (3R)-3-hydroxyasparagine. One can recognise a CUB 2 domain in the interval 192 to 304 (CSSELYTEPS…RGWKLHYTTE (113 aa)). At serine 205 the chain carries Phosphoserine; by CK2. Asparagine 220 carries an N-linked (GlcNAc...) asparagine glycan. Positions 242, 252, 289, and 293 each coordinate Ca(2+). A disulfide bridge connects residues cysteine 249 and cysteine 267. 2 Sushi domains span residues 306-372 (IKCP…RCKI) and 373-448 (KNCG…RCLP). Intrachain disulfides connect cysteine 308-cysteine 357, cysteine 337-cysteine 370, cysteine 375-cysteine 428, cysteine 405-cysteine 446, and cysteine 450-cysteine 578. One can recognise a Peptidase S1 domain in the interval 463-703 (IIGGQPARPG…YVDWIKKEMG (241 aa)). Residues histidine 501 and aspartate 558 each act as charge relay system in the active site. The N-linked (GlcNAc...) asparagine glycan is linked to asparagine 582. 2 disulfide bridges follow: cysteine 621/cysteine 640 and cysteine 651/cysteine 681. Serine 655 (charge relay system) is an active-site residue.

Belongs to the peptidase S1 family. As to quaternary structure, core component of the complement C1 complex, a calcium-dependent complex composed of 1 molecule of the C1Q subcomplex, 2 molecules of C1R and 2 molecules of C1S. The C1Q subcomplex is composed 18 subunits: 3 chains of C1QA, C1QB, and C1QC trimerize to form 6 collagen-like triple helices connected to six globular ligand-recognition modules. Within the C1 complex, C1R is a dimer of identical chains, each of which is activated by cleavage into two chains, heavy and light, connected by disulfide bonds. In terms of processing, cleaved and activated by autocatalytic processing to generate Complement C1r subcomponent heavy and light chains that are connected by disulfide bonds. Post-translationally, the iron and 2-oxoglutarate dependent 3-hydroxylation of aspartate and asparagine is (R) stereospecific within EGF domains.

The protein resides in the secreted. The protein localises to the cell surface. It catalyses the reaction Selective cleavage of Lys(or Arg)-|-Ile bond in complement subcomponent C1s to form the active form of C1s (EC 3.4.21.42).. Its activity is regulated as follows. Activated by the C1Q subcomplex of the C1 complex following C1Q binding to immunoglobulins (IgG or IgM) complexed with antigens to form antigen-antibody complexes on the surface of pathogens. Immunoglobulin-binding promotes autoactivation of C1R, which results in the cleavage of the Arg-Ile bond in the catalytic domain. Serine protease component of the complement C1 complex, a multiprotein complex that initiates the classical pathway of the complement system, a cascade of proteins that leads to phagocytosis and breakdown of pathogens and signaling that strengthens the adaptive immune system. C1R catalyzes the first enzymatic step in the classical complement pathway: it is activated by the C1Q subcomplex of the C1 complex, which associates with IgG or IgM immunoglobulins complexed with antigens to form antigen-antibody complexes on the surface of pathogens. Immunoglobulin-binding promotes the autocatalytic cleavage and activation of C1R. Activated C1R then cleaves and activates C1S, the second protease of the classical complement pathway. It is unclear if C1R activates C1S within single, strained C1 complexes or between neighboring C1 complexes on surfaces. This Mus musculus (Mouse) protein is Complement C1r-B subcomponent (C1rb).